A 236-amino-acid chain; its full sequence is Ribose-5-phosphate isomerase A (236 aa).

Substrate-binding positions include 31–34, 88–91, and 101–104; these read TGST, DGAD, and KGGG. Catalysis depends on Glu110, which acts as the Proton acceptor. Lys128 serves as a coordination point for substrate.

It belongs to the ribose 5-phosphate isomerase family. As to quaternary structure, homodimer.

It carries out the reaction aldehydo-D-ribose 5-phosphate = D-ribulose 5-phosphate. It participates in carbohydrate degradation; pentose phosphate pathway; D-ribose 5-phosphate from D-ribulose 5-phosphate (non-oxidative stage): step 1/1. Functionally, catalyzes the reversible conversion of ribose-5-phosphate to ribulose 5-phosphate. The polypeptide is Ribose-5-phosphate isomerase A (Thermosynechococcus vestitus (strain NIES-2133 / IAM M-273 / BP-1)).